A 473-amino-acid chain; its full sequence is Photosystem II CP43 reaction center protein (473 aa).

Residues 1–14 (MKTLYSLRRSYPVE) constitute a propeptide that is removed on maturation. T15 carries the N-acetylthreonine modification. Position 15 is a phosphothreonine (T15). The next 5 helical transmembrane spans lie at 69–93 (LFEV…PHLA), 134–155 (LIGP…KDRN), 178–200 (KALY…RKIT), 255–275 (KPFA…LSYS), and 291–312 (WFNN…ASQA). E367 is a binding site for [CaMn4O5] cluster. Residues 447 to 471 (RARAAAAGFEKGIDRDFEPVLSMTP) traverse the membrane as a helical segment.

The protein belongs to the PsbB/PsbC family. PsbC subfamily. As to quaternary structure, PSII is composed of 1 copy each of membrane proteins PsbA, PsbB, PsbC, PsbD, PsbE, PsbF, PsbH, PsbI, PsbJ, PsbK, PsbL, PsbM, PsbT, PsbX, PsbY, PsbZ, Psb30/Ycf12, at least 3 peripheral proteins of the oxygen-evolving complex and a large number of cofactors. It forms dimeric complexes. The cofactor is Binds multiple chlorophylls and provides some of the ligands for the Ca-4Mn-5O cluster of the oxygen-evolving complex. It may also provide a ligand for a Cl- that is required for oxygen evolution. PSII binds additional chlorophylls, carotenoids and specific lipids..

Its subcellular location is the plastid. It localises to the chloroplast thylakoid membrane. Its function is as follows. One of the components of the core complex of photosystem II (PSII). It binds chlorophyll and helps catalyze the primary light-induced photochemical processes of PSII. PSII is a light-driven water:plastoquinone oxidoreductase, using light energy to abstract electrons from H(2)O, generating O(2) and a proton gradient subsequently used for ATP formation. This chain is Photosystem II CP43 reaction center protein, found in Abies alba (Edeltanne).